A 327-amino-acid polypeptide reads, in one-letter code: Cell division protein ZipA (327 aa).

The Periplasmic portion of the chain corresponds to 1–5; the sequence is MQDLR. Residues 6-26 form a helical membrane-spanning segment; that stretch reads LILIVVGAIAIIALLLHGLWT. Topologically, residues 27-327 are cytoplasmic; the sequence is SRKERSSLFR…REVLDANTIA (301 aa). Residues 60–71 show a composition bias toward basic and acidic residues; that stretch reads GEVRVRTSHPQE. A disordered region spans residues 60-182; sequence GEVRVRTSHP…EPVAPAPEAK (123 aa). Composition is skewed to polar residues over residues 94 to 103 and 163 to 173; these read KSAQVKTASR and APQQHVESQQE.

The protein belongs to the ZipA family. Interacts with FtsZ via their C-terminal domains.

It is found in the cell inner membrane. Essential cell division protein that stabilizes the FtsZ protofilaments by cross-linking them and that serves as a cytoplasmic membrane anchor for the Z ring. Also required for the recruitment to the septal ring of downstream cell division proteins. This chain is Cell division protein ZipA, found in Yersinia pseudotuberculosis serotype O:1b (strain IP 31758).